The chain runs to 67 residues: Large ribosomal subunit protein bL35 (67 aa).

It belongs to the bacterial ribosomal protein bL35 family.

In Zymomonas mobilis subsp. mobilis (strain ATCC 31821 / ZM4 / CP4), this protein is Large ribosomal subunit protein bL35.